The chain runs to 241 residues: Zinc finger CCHC domain-containing protein 24 (241 aa).

Phosphoserine is present on residues S65 and S93. A CCHC-type zinc finger spans residues 132–149 (YLCHLCFNKGHYIKDCPQ).

This is Zinc finger CCHC domain-containing protein 24 (ZCCHC24) from Homo sapiens (Human).